A 337-amino-acid chain; its full sequence is Probable allantoicase 1 (337 aa).

It belongs to the allantoicase family.

It catalyses the reaction allantoate + H2O = (S)-ureidoglycolate + urea. It functions in the pathway nitrogen metabolism; (S)-allantoin degradation; (S)-ureidoglycolate from allantoate (aminidohydrolase route): step 1/1. The chain is Probable allantoicase 1 from Burkholderia mallei (strain ATCC 23344).